We begin with the raw amino-acid sequence, 833 residues long: MTFYDHTAIEPKWQAFWADNHTFKTGTDASKPKFYALDMFPYPSGAGLHVGHPEGYTATDILSRFKRAQGHNVLHPMGWDAFGLPAEQYAMDTGNDPAEFTAENIANFKRQINALGFSYDWDREVNTTDPNYYKWTQWIFTKLYEKGLAYEAEVPVNWVEELGTAIANEEVLPDGTSERGGYPVVRKPMRQWMLKITAYAERLLEDLEEVDWPESIKDMQRNWIGKSTGANVTFKVKDTDKDFTVFTTRPDTLFGATYAVLAPEHALVDAITTADQAEAVADYKRQASLKSDLARTDLAKEKTGVWTGSYAINPVNGNEMPVWIADYVLASYGTGAIMAVPAHDERDWEFAKQFNLDIIPVLEGGNVEEAAFTEDGLHINSGFLDGLDKASAIAKMVEWLEAEGVGNEKVTYRLRDWLFSRQRYWGEPIPIIHWEDGTSTAVPESELPLVLPVTKDIRPSGTGESPLANVTDWLEVTREDGVKGRRETNTMPQWAGSSWYYLRYIDPHNTEKLADEELLKQWLPVDIYVGGAEHAVLHLLYARFWHKVLYDLGVVPTKEPFQKLFNQGMILGTSYRDSRGALVATDKVEKRDGSFFHVETGEELEQAPAKMSKSLKNVVNPDDVVEQYGADTLRVYEMFMGPLDASIAWSEEGLEGSRKFLDRVYRLITTKEITEENSGALDKVYNETVKAVTEQVDQMKFNTAIAQLMVFVNAANKEDKLFSDYAKGFVQLIAPFAPHLGEELWQALTASGESISYVPWPSYDKSKLVENDVEIVVQIKGKVKAKLVVAKDLSREELQEVALANEKVQAEITGKDIIKVIAVPNKLVNIVIK.

Positions 41–52 (PYPSGAGLHVGH) match the 'HIGH' region motif. The short motif at 610–614 (KMSKS) is the 'KMSKS' region element. Position 613 (Lys-613) interacts with ATP.

Belongs to the class-I aminoacyl-tRNA synthetase family.

The protein localises to the cytoplasm. It catalyses the reaction tRNA(Leu) + L-leucine + ATP = L-leucyl-tRNA(Leu) + AMP + diphosphate. This chain is Leucine--tRNA ligase, found in Streptococcus pyogenes serotype M6 (strain ATCC BAA-946 / MGAS10394).